Reading from the N-terminus, the 147-residue chain is Protein-export protein SecB 2 (147 aa).

Belongs to the SecB family. Homotetramer, a dimer of dimers. One homotetramer interacts with 1 SecA dimer.

The protein resides in the cytoplasm. One of the proteins required for the normal export of preproteins out of the cell cytoplasm. It is a molecular chaperone that binds to a subset of precursor proteins, maintaining them in a translocation-competent state. It also specifically binds to its receptor SecA. In Francisella tularensis subsp. holarctica (strain FTNF002-00 / FTA), this protein is Protein-export protein SecB 2.